The sequence spans 459 residues: Cysteine--tRNA ligase (459 aa).

A Zn(2+)-binding site is contributed by C28. The 'HIGH' region motif lies at V30–H40. Zn(2+)-binding residues include C209, H234, and E238. Positions K266–S270 match the 'KMSKS' region motif. K269 serves as a coordination point for ATP.

This sequence belongs to the class-I aminoacyl-tRNA synthetase family. In terms of assembly, monomer. It depends on Zn(2+) as a cofactor.

It localises to the cytoplasm. The enzyme catalyses tRNA(Cys) + L-cysteine + ATP = L-cysteinyl-tRNA(Cys) + AMP + diphosphate. The sequence is that of Cysteine--tRNA ligase from Shewanella baltica (strain OS185).